Here is a 263-residue protein sequence, read N- to C-terminus: Polyglutamine-binding protein 1 (263 aa).

Positions 46–80 constitute a WW domain; it reads EGLPPSWYKVFDPSCGLPYYWNVDTDLVSWLSPHD. Residue S94 is modified to Phosphoserine. The interval 94 to 263 is disordered; it reads SSNADAEEKL…AEASRTKQQD (170 aa). Positions 99–173 are enriched in basic and acidic residues; sequence AEEKLDRSHE…DKVDREESKE (75 aa). 14 repeat units span residues 104 to 110, 111 to 117, 118 to 124, 125 to 131, 132 to 138, 139 to 140, 141 to 142, 143 to 144, 150 to 151, 152 to 153, 154 to 155, 156 to 157, 158 to 159, and 160 to 161. The tract at residues 104–138 is 5 X 7 AA approximate tandem repeats of D-R-[SG]-H-D-K-S; it reads DRSHEKSDRGHEKSDRGHEKSDRSHEKSERNHEKS. The 3 X 2 AA tandem repeats of [DE]-R stretch occupies residues 139-144; the sequence is DRDRER. The interval 150–161 is 6 X 2 AA tandem repeats of [DE]-R; sequence DRERERDRDRDR. Residues 243 to 253 form an important for interaction with TXNL4A region; that stretch reads YPSPGAVLRAN. A Phosphoserine modification is found at S245.

In terms of assembly, interacts with POU3F2/Brn-2, ATXN1, TXNL4A, HTT and AR. Interaction with ATXN1 correlates positively with the length of the polyglutamine tract. Interacts with RNA polymerase II large subunit in a phosphorylation-dependent manner. Forms a ternary complex with ATXN1 mutant and phosphorylated RNA polymerase II. Interacts (via C-terminus) with TXNL4A and CD2BP2. Interacts (via WW domain) with ATN1 and SF3B1, and may interact with additional splice factors. Interacts (via WW domain) with WBP11; Leading to reduce interaction between PQBP1 and TXNL4A. Interacts with CAPRIN1. Interacts with DDX1. Interacts with SFPQ. Interacts with KHSRP.

It is found in the nucleus. Its subcellular location is the nucleus speckle. It localises to the cytoplasmic granule. Functionally, intrinsically disordered protein that acts as a scaffold, and which is involved in different processes, such as pre-mRNA splicing, transcription regulation, innate immunity and neuron development. Interacts with splicing-related factors via the intrinsically disordered region and regulates alternative splicing of target pre-mRNA species. May suppress the ability of POU3F2 to transactivate the DRD1 gene in a POU3F2 dependent manner. Can activate transcription directly or via association with the transcription machinery. May be involved in ATXN1 mutant-induced cell death. The interaction with ATXN1 mutant reduces levels of phosphorylated RNA polymerase II large subunit. Involved in the assembly of cytoplasmic stress granule, possibly by participating in the transport of neuronal RNA granules. Also acts as an innate immune sensor of infection by retroviruses, by detecting the presence of reverse-transcribed DNA in the cytosol. Directly binds retroviral reverse-transcribed DNA in the cytosol and interacts with CGAS, leading to activate the cGAS-STING signaling pathway, triggering type-I interferon production. This is Polyglutamine-binding protein 1 (PQBP1) from Bos taurus (Bovine).